A 71-amino-acid chain; its full sequence is Long neurotoxin 1 (71 aa).

5 disulfide bridges follow: Cys3–Cys20, Cys14–Cys41, Cys26–Cys30, Cys45–Cys56, and Cys57–Cys62.

Belongs to the three-finger toxin family. Long-chain subfamily. Type II alpha-neurotoxin sub-subfamily. As to expression, expressed by the venom gland.

The protein resides in the secreted. In terms of biological role, binds with high affinity to muscular (alpha-1/CHRNA1) and neuronal (alpha-7/CHRNA7) nicotinic acetylcholine receptor (nAChR) and inhibits acetylcholine from binding to the receptor, thereby impairing neuromuscular and neuronal transmission. This is Long neurotoxin 1 from Naja nivea (Cape cobra).